The following is a 284-amino-acid chain: Bifunctional protein FolD (284 aa).

Position 166–168 (166–168) interacts with NADP(+); that stretch reads GAS.

This sequence belongs to the tetrahydrofolate dehydrogenase/cyclohydrolase family. In terms of assembly, homodimer.

The catalysed reaction is (6R)-5,10-methylene-5,6,7,8-tetrahydrofolate + NADP(+) = (6R)-5,10-methenyltetrahydrofolate + NADPH. The enzyme catalyses (6R)-5,10-methenyltetrahydrofolate + H2O = (6R)-10-formyltetrahydrofolate + H(+). The protein operates within one-carbon metabolism; tetrahydrofolate interconversion. Catalyzes the oxidation of 5,10-methylenetetrahydrofolate to 5,10-methenyltetrahydrofolate and then the hydrolysis of 5,10-methenyltetrahydrofolate to 10-formyltetrahydrofolate. The protein is Bifunctional protein FolD of Nitrosococcus oceani (strain ATCC 19707 / BCRC 17464 / JCM 30415 / NCIMB 11848 / C-107).